The sequence spans 897 residues: F-BAR domain only protein 1 (897 aa).

The mediates membrane-binding stretch occupies residues 1–276 (MIHFFHTLQG…VGFEEYLSSL (276 aa)). The F-BAR domain occupies 2 to 248 (IHFFHTLQGE…NVENIGIENL (247 aa)). Positions 134-154 (LQKTREGYHSKCVELERLRKE) form a coiled coil. The segment at 475–537 (VEDSGLDSPS…PNPAPSSQSN (63 aa)) is disordered. A compositionally biased stretch (polar residues) spans 501-520 (PSSQSQSKDSINAASQSRGG). One can recognise an MHD domain in the interval 630 to 894 (SWPVAAAITE…RFATGKYMAG (265 aa)).

This sequence belongs to the FCHO family. In terms of assembly, may oligomerize and form homotetramer. Interacts with acvr1l/alk8; linking this receptor to clathrin-mediated endocytosis.

It localises to the membrane. The protein resides in the clathrin-coated pit. Its function is as follows. May function in an early step of clathrin-mediated endocytosis. May regulate Bmp signaling by regulating clathrin-mediated endocytosis of Bmp receptors. The protein is F-BAR domain only protein 1 (fcho1) of Danio rerio (Zebrafish).